A 255-amino-acid polypeptide reads, in one-letter code: Ribonuclease HII (255 aa).

Positions 72 to 255 constitute an RNase H type-2 domain; that stretch reads RLIAGVDEVG…KTFAPVQSFR (184 aa). Residues Asp78, Glu79, and Asp170 each coordinate a divalent metal cation.

The protein belongs to the RNase HII family. The cofactor is Mn(2+). It depends on Mg(2+) as a cofactor.

It localises to the cytoplasm. It carries out the reaction Endonucleolytic cleavage to 5'-phosphomonoester.. Functionally, endonuclease that specifically degrades the RNA of RNA-DNA hybrids. This Bacillus subtilis (strain 168) protein is Ribonuclease HII (rnhB).